The chain runs to 299 residues: N-acetylmuramic acid 6-phosphate etherase (299 aa).

An SIS domain is found at 57–220; that stretch reads ISAAFHKKGR…TTGAMIRTGK (164 aa). Catalysis depends on glutamate 85, which acts as the Proton donor. Glutamate 116 is an active-site residue.

This sequence belongs to the GCKR-like family. MurNAc-6-P etherase subfamily. As to quaternary structure, homodimer.

The catalysed reaction is N-acetyl-D-muramate 6-phosphate + H2O = N-acetyl-D-glucosamine 6-phosphate + (R)-lactate. Its pathway is amino-sugar metabolism; 1,6-anhydro-N-acetylmuramate degradation. The protein operates within amino-sugar metabolism; N-acetylmuramate degradation. It functions in the pathway cell wall biogenesis; peptidoglycan recycling. Functionally, specifically catalyzes the cleavage of the D-lactyl ether substituent of MurNAc 6-phosphate, producing GlcNAc 6-phosphate and D-lactate. Together with AnmK, is also required for the utilization of anhydro-N-acetylmuramic acid (anhMurNAc) either imported from the medium or derived from its own cell wall murein, and thus plays a role in cell wall recycling. This is N-acetylmuramic acid 6-phosphate etherase from Psychromonas ingrahamii (strain DSM 17664 / CCUG 51855 / 37).